The sequence spans 418 residues: Glutamyl-tRNA reductase (418 aa).

Substrate-binding positions include T49 to R52, S108, E113 to Q115, and Q119. C50 acts as the Nucleophile in catalysis. Position 188–193 (G188–I193) interacts with NADP(+).

The protein belongs to the glutamyl-tRNA reductase family. As to quaternary structure, homodimer.

It carries out the reaction (S)-4-amino-5-oxopentanoate + tRNA(Glu) + NADP(+) = L-glutamyl-tRNA(Glu) + NADPH + H(+). Its pathway is porphyrin-containing compound metabolism; protoporphyrin-IX biosynthesis; 5-aminolevulinate from L-glutamyl-tRNA(Glu): step 1/2. Functionally, catalyzes the NADPH-dependent reduction of glutamyl-tRNA(Glu) to glutamate 1-semialdehyde (GSA). The polypeptide is Glutamyl-tRNA reductase (Aliivibrio fischeri (strain ATCC 700601 / ES114) (Vibrio fischeri)).